The primary structure comprises 173 residues: Translocon-associated protein subunit delta (173 aa).

The N-terminal stretch at 1–23 (MAAMASFGALALLLLSGLSCCSA) is a signal peptide. The Lumenal portion of the chain corresponds to 24-144 (EACLEPQITP…SVDHRGTWNG (121 aa)). Cys-26 and Cys-57 form a disulfide bridge. A Glycyl lysine isopeptide (Lys-Gly) (interchain with G-Cter in ubiquitin) cross-link involves residue Lys-73. A helical transmembrane segment spans residues 145-165 (PWVSTEVLAAAIGIVIYYLAF). At 166-173 (SAKSHIQA) the chain is on the cytoplasmic side.

The protein belongs to the TRAP-delta family. As to quaternary structure, heterotetramer of TRAP-alpha, TRAP-beta, TRAP-delta and TRAP-gamma.

The protein localises to the endoplasmic reticulum membrane. Functionally, TRAP proteins are part of a complex whose function is to bind calcium to the ER membrane and thereby regulate the retention of ER resident proteins. The polypeptide is Translocon-associated protein subunit delta (Ssr4) (Rattus norvegicus (Rat)).